The chain runs to 157 residues: Small ribosomal subunit protein uS7cz/uS7cy (157 aa).

This sequence belongs to the universal ribosomal protein uS7 family. Part of the 30S ribosomal subunit.

The protein resides in the plastid. Its subcellular location is the chloroplast. Functionally, one of the primary rRNA binding proteins, it binds directly to 16S rRNA where it nucleates assembly of the head domain of the 30S subunit. The chain is Small ribosomal subunit protein uS7cz/uS7cy (rps7-A) from Welwitschia mirabilis (Tree tumbo).